A 293-amino-acid polypeptide reads, in one-letter code: Acetylglutamate kinase (293 aa).

Residues 68–69, Arg90, and Asn189 contribute to the substrate site; that span reads GG.

The protein belongs to the acetylglutamate kinase family. ArgB subfamily.

It is found in the cytoplasm. It carries out the reaction N-acetyl-L-glutamate + ATP = N-acetyl-L-glutamyl 5-phosphate + ADP. Its pathway is amino-acid biosynthesis; L-arginine biosynthesis; N(2)-acetyl-L-ornithine from L-glutamate: step 2/4. Its function is as follows. Catalyzes the ATP-dependent phosphorylation of N-acetyl-L-glutamate. The sequence is that of Acetylglutamate kinase from Mycolicibacterium smegmatis (strain ATCC 700084 / mc(2)155) (Mycobacterium smegmatis).